Here is a 213-residue protein sequence, read N- to C-terminus: Adenylate kinase (213 aa).

Residue 10–15 (GAGKGT) coordinates ATP. Residues 30–59 (STGDMFRAAMANQTEMGLLAKSYIDKGDLV) form an NMP region. AMP-binding positions include Thr-31, Arg-36, 57-59 (DLV), 86-89 (GYPR), and Gln-93. An LID region spans residues 127–160 (GRIIHKKTGETFHKIFNPPAGDYDENDYYQREDD). Residues Arg-128 and 137 to 138 (TF) each bind ATP. The AMP site is built by Arg-157 and Arg-168. Residue Gln-196 participates in ATP binding.

Belongs to the adenylate kinase family. As to quaternary structure, monomer.

It localises to the cytoplasm. The enzyme catalyses AMP + ATP = 2 ADP. The protein operates within purine metabolism; AMP biosynthesis via salvage pathway; AMP from ADP: step 1/1. Catalyzes the reversible transfer of the terminal phosphate group between ATP and AMP. Plays an important role in cellular energy homeostasis and in adenine nucleotide metabolism. This chain is Adenylate kinase, found in Streptococcus uberis (strain ATCC BAA-854 / 0140J).